The primary structure comprises 497 residues: 4,4'-diapolycopene oxygenase (497 aa).

Belongs to the carotenoid/retinoid oxidoreductase family. FAD serves as cofactor.

The enzyme catalyses all-trans-4,4'-diapolycopene + 4 AH2 + 4 O2 = all-trans-4,4'-diapolycopene-4,4'-dial + 4 A + 6 H2O. It catalyses the reaction all-trans-4,4'-diaponeurosporene + 2 AH2 + 2 O2 = 4,4'-diaponeurosporenal + 2 A + 3 H2O. Its pathway is carotenoid biosynthesis. In terms of biological role, involved in the biosynthesis of C30 carotenoids. Catalyzes the oxidation of the terminal methyl side groups of 4,4'-diapolycopene to yield 4,4'-diapolycopen-4,4'-dial via the aldehyde intermediate 4,4'-diapolycopen-al. Also able to catalyze the oxidation of the terminal methyl side group of 4,4'-diaponeurosporene to form 4,4'-diaponeurosporen-4-al. It has moderate to low activity on the C40 substrates neurosporene and lycopene, and has no detectable activity on zeta-carotene or beta-carotene. This Methylomonas sp protein is 4,4'-diapolycopene oxygenase.